An 860-amino-acid chain; its full sequence is Leucine--tRNA ligase (860 aa).

The 'HIGH' region signature appears at 42–52 (PYPSGRLHMGH). The 'KMSKS' region signature appears at 619 to 623 (KMSKS). Position 622 (Lys-622) interacts with ATP.

It belongs to the class-I aminoacyl-tRNA synthetase family.

The protein localises to the cytoplasm. The catalysed reaction is tRNA(Leu) + L-leucine + ATP = L-leucyl-tRNA(Leu) + AMP + diphosphate. The chain is Leucine--tRNA ligase from Escherichia coli (strain SE11).